The primary structure comprises 131 residues: Superoxide dismutase [Ni] (131 aa).

Positions 1–14 (MLSRLFAPKVKVSA) are excised as a propeptide. The Ni(2+) site is built by His15, Cys16, and Cys20.

The protein belongs to the nickel superoxide dismutase family. As to quaternary structure, homohexamer. The hexameric protein has roughly the shape of a hollow sphere with an outer diameter of 72 Angstroms and a large inner cavity. It depends on Ni(2+) as a cofactor.

It localises to the cytoplasm. It carries out the reaction 2 superoxide + 2 H(+) = H2O2 + O2. The chain is Superoxide dismutase [Ni] (sodN) from Streptomyces seoulensis.